We begin with the raw amino-acid sequence, 171 residues long: uncharacterized protein (171 aa).

The PfpI endopeptidase domain occupies 3-171 (KKVAIILANE…FNREIVKQLQ (169 aa)).

It belongs to the peptidase C56 family.

This is an uncharacterized protein from Staphylococcus aureus (strain MRSA252).